Consider the following 141-residue polypeptide: Cystatin (141 aa).

An N-terminal signal peptide occupies residues 1–26; sequence MVHSQLPVAASLRLLCALLLLPSATM. In terms of domain architecture, Cystatin spans 29-129; sequence GGLSPRSVTD…CRFQVWSRPW (101 aa). A Secondary area of contact motif is present at residues 73–77; it reads QVVAG. 2 disulfide bridges follow: Cys91-Cys107 and Cys120-Cys140.

This sequence belongs to the cystatin family. Expressed by the venom gland at an extremely low level (at protein level).

Its subcellular location is the secreted. Inhibits various C1 cysteine proteases including cathepsin L, papain and cathepsin B. This protein has no toxic activity and its function in the venom is unknown. It may play a role as a housekeeping or regulatory protein. The protein is Cystatin of Cryptophis nigrescens (Eastern small-eyed snake).